The following is a 272-amino-acid chain: NAD kinase (272 aa).

Aspartate 50 (proton acceptor) is an active-site residue. NAD(+) contacts are provided by residues 50-51 (DG), 126-127 (NE), arginine 152, aspartate 154, 165-170 (TAYNKS), and alanine 189.

The protein belongs to the NAD kinase family. Requires a divalent metal cation as cofactor.

It localises to the cytoplasm. It carries out the reaction NAD(+) + ATP = ADP + NADP(+) + H(+). In terms of biological role, involved in the regulation of the intracellular balance of NAD and NADP, and is a key enzyme in the biosynthesis of NADP. Catalyzes specifically the phosphorylation on 2'-hydroxyl of the adenosine moiety of NAD to yield NADP. In Streptococcus pneumoniae (strain 70585), this protein is NAD kinase.